The primary structure comprises 635 residues: PTS system mannitol-specific EIICBA component (635 aa).

A PTS EIIC type-2 domain is found at 12-342 (FGRFLSNMVM…LFKTSKVKER (331 aa)). 6 helical membrane passes run 24–45 (IGAF…WLPN), 50–70 (KLVG…TGGK), 134–155 (SAGI…PAVE), 165–185 (VNFM…EPAK), 273–292 (VILG…GGLV), and 313–334 (FANI…AVLF). Residues 378 to 473 (RKIIVACDAG…RLVAAQRHID (96 aa)) form the PTS EIIB type-2 domain. The active-site Phosphocysteine intermediate; for EIIB activity is the Cys384. The residue at position 384 (Cys384) is a Phosphocysteine; by EIIA. The PTS EIIA type-2 domain maps to 494–635 (FQLGADNIFL…VDEVLALLNK (142 aa)). The active-site Tele-phosphohistidine intermediate; for EIIA activity is His554. A Phosphohistidine; by HPr modification is found at His554.

As to quaternary structure, homodimer. Post-translationally, an intramolecular phosphotransfer takes places between His-554 and Cys-384.

It localises to the cell inner membrane. It catalyses the reaction D-mannitol(out) + N(pros)-phospho-L-histidyl-[protein] = D-mannitol 1-phosphate(in) + L-histidyl-[protein]. In terms of biological role, the phosphoenolpyruvate-dependent sugar phosphotransferase system (sugar PTS), a major carbohydrate active transport system, catalyzes the phosphorylation of incoming sugar substrates concomitantly with their translocation across the cell membrane. This system is involved in D-mannitol transport. This Klebsiella pneumoniae protein is PTS system mannitol-specific EIICBA component.